A 236-amino-acid chain; its full sequence is 6-carboxyhexanoate--CoA ligase (236 aa).

The protein belongs to the BioW family. Homodimer. It depends on Mg(2+) as a cofactor.

The enzyme catalyses heptanedioate + ATP + CoA = 6-carboxyhexanoyl-CoA + AMP + diphosphate. It functions in the pathway metabolic intermediate metabolism; pimeloyl-CoA biosynthesis; pimeloyl-CoA from pimelate: step 1/1. Catalyzes the transformation of pimelate into pimeloyl-CoA with concomitant hydrolysis of ATP to AMP. This Methanococcus aeolicus (strain ATCC BAA-1280 / DSM 17508 / OCM 812 / Nankai-3) protein is 6-carboxyhexanoate--CoA ligase.